A 142-amino-acid polypeptide reads, in one-letter code: Hemoglobin subunit alpha-A (142 aa).

A Globin domain is found at 2-142; the sequence is VLSAADKNNV…VGTVLTAKYR (141 aa). Position 59 (histidine 59) interacts with O2. Histidine 88 contacts heme b.

It belongs to the globin family. As to quaternary structure, heterotetramer of two alpha chains and two beta chains. As to expression, red blood cells.

In terms of biological role, involved in oxygen transport from the lung to the various peripheral tissues. This chain is Hemoglobin subunit alpha-A (HBAA), found in Gallus gallus (Chicken).